The following is a 115-amino-acid chain: Large ribosomal subunit protein bL19 (115 aa).

Belongs to the bacterial ribosomal protein bL19 family.

In terms of biological role, this protein is located at the 30S-50S ribosomal subunit interface and may play a role in the structure and function of the aminoacyl-tRNA binding site. The protein is Large ribosomal subunit protein bL19 of Akkermansia muciniphila (strain ATCC BAA-835 / DSM 22959 / JCM 33894 / BCRC 81048 / CCUG 64013 / CIP 107961 / Muc).